Reading from the N-terminus, the 492-residue chain is Catalase isozyme 3 (492 aa).

Residues His-65 and Asn-138 contribute to the active site. Residue Tyr-347 participates in heme binding.

The protein belongs to the catalase family. As to quaternary structure, homotetramer. Heme serves as cofactor. As to expression, abundant in green cotyledons, etiolated cotyledons, green hypocotyl and root, but not in young leaf.

It is found in the peroxisome. The catalysed reaction is 2 H2O2 = O2 + 2 H2O. Occurs in almost all aerobically respiring organisms and serves to protect cells from the toxic effects of hydrogen peroxide. The protein is Catalase isozyme 3 (CAT3) of Cucurbita pepo (Vegetable marrow).